Reading from the N-terminus, the 311-residue chain is Ribosomal RNA small subunit methyltransferase H (311 aa).

S-adenosyl-L-methionine contacts are provided by residues 33–35 (GGH), Asp-51, Phe-78, Asp-99, and Gln-106. The interval 289 to 311 (EEIEKNRRAHSAKLRAAEKLSFA) is disordered.

It belongs to the methyltransferase superfamily. RsmH family.

The protein localises to the cytoplasm. The catalysed reaction is cytidine(1402) in 16S rRNA + S-adenosyl-L-methionine = N(4)-methylcytidine(1402) in 16S rRNA + S-adenosyl-L-homocysteine + H(+). In terms of biological role, specifically methylates the N4 position of cytidine in position 1402 (C1402) of 16S rRNA. The chain is Ribosomal RNA small subunit methyltransferase H from Carboxydothermus hydrogenoformans (strain ATCC BAA-161 / DSM 6008 / Z-2901).